A 90-amino-acid polypeptide reads, in one-letter code: U7-theraphotoxin-Hhn1h (90 aa).

Positions 1–19 are cleaved as a signal peptide; sequence MKTAIFTVVLALAVFAVLS. A propeptide spanning residues 20–50 is cleaved from the precursor; that stretch reads FGWEANEKALSEEFTELIHEKEAASETEARE. Cystine bridges form between cysteine 51–cysteine 65, cysteine 58–cysteine 70, and cysteine 64–cysteine 81.

It belongs to the neurotoxin 10 (Hwtx-1) family. 13 (Hntx-13) subfamily. Expressed by the venom gland.

It is found in the secreted. Ion channel inhibitor. This is U7-theraphotoxin-Hhn1h from Cyriopagopus hainanus (Chinese bird spider).